Here is a 600-residue protein sequence, read N- to C-terminus: Keratin, type II cuticular Hb4 (600 aa).

Positions 1-165 (MSCRSYRVSS…PNAQRVKKDE (165 aa)) are head. Residues 165–476 (EKEQIKTLNN…RLLEGEESRL (312 aa)) form the IF rod domain. Positions 166-200 (KEQIKTLNNKFASFIDKVRFLEQQNKLLETKWSFL) are coil 1A. The interval 201–210 (QEQKCIRSNL) is linker 1. The tract at residues 211–311 (EPLFESYITN…YMEEIQLLQS (101 aa)) is coil 1B. The segment at 312–328 (HISETSVIVKMDNSRDL) is linker 12. The tract at residues 329–472 (NLDGIIAEVK…ATYRRLLEGE (144 aa)) is coil 2. The tail stretch occupies residues 473-600 (ESRLCEGVGP…STTTSCRTKY (128 aa)).

This sequence belongs to the intermediate filament family. As to quaternary structure, heterotetramer of two type I and two type II keratins. In terms of tissue distribution, expressed in the hair follicles.

This Homo sapiens (Human) protein is Keratin, type II cuticular Hb4 (KRT84).